Consider the following 381-residue polypeptide: Flagellar P-ring protein (381 aa).

The signal sequence occupies residues 1–33; it reads MQFFNTLHPTRPHWLLAALCLIASLLGAGTAQA.

The protein belongs to the FlgI family. As to quaternary structure, the basal body constitutes a major portion of the flagellar organelle and consists of four rings (L,P,S, and M) mounted on a central rod.

The protein localises to the periplasm. Its subcellular location is the bacterial flagellum basal body. In terms of biological role, assembles around the rod to form the L-ring and probably protects the motor/basal body from shearing forces during rotation. The polypeptide is Flagellar P-ring protein (Albidiferax ferrireducens (strain ATCC BAA-621 / DSM 15236 / T118) (Rhodoferax ferrireducens)).